A 227-amino-acid polypeptide reads, in one-letter code: GRF-interacting factor 1 (227 aa).

Low complexity predominate over residues 124–139 (ALSPLQQQQQQQAAAA). Disordered stretches follow at residues 124-160 (ALSPLQQQQQQQAAAAHGQLGMGSGGTTSGFSILHGE) and 188-227 (GGGGGGKEGSTSLSVDVRGANSGAQSGDGEYLKGTEEEGS). Basic and acidic residues predominate over residues 217–227 (EYLKGTEEEGS).

The protein belongs to the SS18 family. Interacts with GRF4. Highly expressed in internodes, nodes, developing spikelets and developing anthers. Expressed at low levels in roots and mature glumes.

The protein resides in the nucleus. It localises to the cytoplasm. Its function is as follows. Transcription coactivator that plays a role in the regulation of meristematic function in leaves, stems and inflorescences. May regulate leaf size, length of stem internodes, and seed size by promoting cell expansion. Transcription coactivator that plays a role in the regulation of grain size. Component of a network formed by the microRNA396 (miRNA396), the GRFs and their interacting factors (GIFs) acting in the regulation of meristem function, at least partially through the control of cell proliferation. Component of the miRNA396c-GRF4-GIF1 regulatory module that plays an important role in grain size determination. This Oryza sativa subsp. japonica (Rice) protein is GRF-interacting factor 1.